The sequence spans 540 residues: Phosphoenolpyruvate carboxykinase (ATP) (540 aa).

Residue arginine 65 coordinates substrate. At lysine 87 the chain carries N6-acetyllysine. Residues tyrosine 207 and lysine 213 each contribute to the substrate site. ATP contacts are provided by residues lysine 213, histidine 232, and 248 to 256 (GLSGTGKTT). Lysine 213 and histidine 232 together coordinate Mn(2+). Aspartate 269 is a binding site for Mn(2+). Residues glutamate 297, arginine 333, 449-450 (RI), and threonine 455 contribute to the ATP site. Arginine 333 is a substrate binding site. At lysine 523 the chain carries N6-acetyllysine.

This sequence belongs to the phosphoenolpyruvate carboxykinase (ATP) family. In terms of assembly, monomer. Mn(2+) is required as a cofactor.

Its subcellular location is the cytoplasm. The enzyme catalyses oxaloacetate + ATP = phosphoenolpyruvate + ADP + CO2. It participates in carbohydrate biosynthesis; gluconeogenesis. Involved in the gluconeogenesis. Catalyzes the conversion of oxaloacetate (OAA) to phosphoenolpyruvate (PEP) through direct phosphoryl transfer between the nucleoside triphosphate and OAA. This Escherichia coli O45:K1 (strain S88 / ExPEC) protein is Phosphoenolpyruvate carboxykinase (ATP).